The following is a 79-amino-acid chain: Sec-independent protein translocase protein TatA (79 aa).

Residues 1-21 (MGGLQPWHWVIVIAVFVLLFG) form a helical membrane-spanning segment. Residues 43-52 (IKEMQSEGKS) show a composition bias toward basic and acidic residues. The segment at 43–79 (IKEMQSEGKSDNPPATPITSERVDTNPTAEQPDKRSA) is disordered.

Belongs to the TatA/E family. In terms of assembly, the Tat system comprises two distinct complexes: a TatABC complex, containing multiple copies of TatA, TatB and TatC subunits, and a separate TatA complex, containing only TatA subunits. Substrates initially bind to the TatABC complex, which probably triggers association of the separate TatA complex to form the active translocon.

It localises to the cell membrane. Its function is as follows. Part of the twin-arginine translocation (Tat) system that transports large folded proteins containing a characteristic twin-arginine motif in their signal peptide across membranes. TatA could form the protein-conducting channel of the Tat system. In Mycobacterium sp. (strain JLS), this protein is Sec-independent protein translocase protein TatA.